Here is a 119-residue protein sequence, read N- to C-terminus: Protein SPIRAL1 (119 aa).

Positions methionine 1–glutamine 11 are enriched in gly residues. Disordered stretches follow at residues methionine 1–threonine 47 and glutamate 85–proline 105. Pro residues predominate over residues alanine 24–alanine 34.

Belongs to the SPIRAL1 family. In terms of processing, ubiquitinated. Upon salt-stress induction, it is subject to proteasome-dependent degradation. Ubiquitous. High expression was associated with tissues undergoing rapid cell expansion, including the root elongation zone, hypocotyls of dark grown-seedlings, and cotyledons of light-grown seedlings.

The protein resides in the cytoplasm. It is found in the cytoskeleton. It localises to the phragmoplast. The protein localises to the spindle. In terms of biological role, required for directional control of cell elongation. Stabilizes growing ends of cortical microtubules and influences their dynamic properties. Acts redundantly with SP1Ls in maintaining the cortical microtubules organization essential for anisotropic cell growth. Plays a key role in salt stress-induced microtubules disassembly. The protein is Protein SPIRAL1 (SPR1) of Arabidopsis thaliana (Mouse-ear cress).